The primary structure comprises 257 residues: ABC transporter ATP-binding protein YxdL (257 aa).

Positions 5-243 constitute an ABC transporter domain; the sequence is LEVKHINKTY…FYEQILDVLS (239 aa). 40–47 contacts ATP; it reads GPSGSGKT.

This sequence belongs to the ABC transporter superfamily. As to quaternary structure, the complex is composed of two ATP-binding proteins (YxdL) and two transmembrane proteins (YxdM).

In terms of biological role, part of the ABC transporter complex YxdLM which could be involved in peptide resistance. Responsible for energy coupling to the transport system. The sequence is that of ABC transporter ATP-binding protein YxdL (yxdL) from Bacillus subtilis (strain 168).